Reading from the N-terminus, the 167-residue chain is NADH-quinone oxidoreductase subunit B 2 (167 aa).

Residues cysteine 39, cysteine 40, cysteine 104, and cysteine 134 each contribute to the [4Fe-4S] cluster site.

This sequence belongs to the complex I 20 kDa subunit family. NDH-1 is composed of 14 different subunits. Subunits NuoB, C, D, E, F, and G constitute the peripheral sector of the complex. [4Fe-4S] cluster serves as cofactor.

The protein resides in the cell inner membrane. It catalyses the reaction a quinone + NADH + 5 H(+)(in) = a quinol + NAD(+) + 4 H(+)(out). NDH-1 shuttles electrons from NADH, via FMN and iron-sulfur (Fe-S) centers, to quinones in the respiratory chain. Couples the redox reaction to proton translocation (for every two electrons transferred, four hydrogen ions are translocated across the cytoplasmic membrane), and thus conserves the redox energy in a proton gradient. This Burkholderia mallei (strain NCTC 10247) protein is NADH-quinone oxidoreductase subunit B 2.